Consider the following 429-residue polypeptide: Enolase (429 aa).

Q162 lines the (2R)-2-phosphoglycerate pocket. Catalysis depends on E204, which acts as the Proton donor. The Mg(2+) site is built by D241, E283, and D310. Residues K335, R364, S365, and K386 each coordinate (2R)-2-phosphoglycerate. K335 (proton acceptor) is an active-site residue.

It belongs to the enolase family. Mg(2+) is required as a cofactor.

Its subcellular location is the cytoplasm. The protein localises to the secreted. It is found in the cell surface. It carries out the reaction (2R)-2-phosphoglycerate = phosphoenolpyruvate + H2O. It participates in carbohydrate degradation; glycolysis; pyruvate from D-glyceraldehyde 3-phosphate: step 4/5. In terms of biological role, catalyzes the reversible conversion of 2-phosphoglycerate (2-PG) into phosphoenolpyruvate (PEP). It is essential for the degradation of carbohydrates via glycolysis. The sequence is that of Enolase from Mycobacterium tuberculosis (strain ATCC 25177 / H37Ra).